Here is a 372-residue protein sequence, read N- to C-terminus: DNA polymerase delta subunit 3 (372 aa).

Disordered stretches follow at residues 156-264 (KKAP…NLDS) and 352-372 (KKNT…FGKK). Positions 160 to 173 (STHSPQLSVPSKTS) are enriched in polar residues. At serine 163 the chain carries Phosphoserine. Composition is skewed to basic and acidic residues over residues 174-190 (TIDK…KGKD) and 209-239 (APLE…DDLK). Polar residues predominate over residues 355-365 (TAQSKPQQKSI).

As to quaternary structure, heterotetramer that consist of the pol3, cdc1, cdc27 and cdm1 subunits. Cdc27 interacts with cdc1 and is required for dimerization of the tetramer.

The protein localises to the nucleus. The polypeptide is DNA polymerase delta subunit 3 (cdc27) (Schizosaccharomyces pombe (strain 972 / ATCC 24843) (Fission yeast)).